A 317-amino-acid chain; its full sequence is Ribosomal lysine N-methyltransferase 5 (317 aa).

S-adenosyl-L-methionine-binding positions include Trp-87, 141–143 (GSG), Asp-163, Trp-214, and Leu-237.

The protein belongs to the class I-like SAM-binding methyltransferase superfamily. RKM5 family.

Its function is as follows. S-adenosyl-L-methionine-dependent protein-lysine N-methyltransferase that methylates 60S ribosomal protein L1. In Eremothecium gossypii (strain ATCC 10895 / CBS 109.51 / FGSC 9923 / NRRL Y-1056) (Yeast), this protein is Ribosomal lysine N-methyltransferase 5 (RKM5).